Here is a 394-residue protein sequence, read N- to C-terminus: Protein NDRG1 (394 aa).

Residue serine 2 is modified to N-acetylserine. 3 positions are modified to phosphoserine: serine 2, serine 319, and serine 326. Residues arginine 325–cysteine 394 are disordered. The segment covering arginine 327–glycine 339 has biased composition (polar residues). Threonine 328 is modified (phosphothreonine; by SGK1). Residues serine 330 and serine 332 each carry the phosphoserine; by SGK1 modification. Position 333 is a phosphoserine (serine 333). At threonine 335 the chain carries Phosphothreonine. A Phosphoserine modification is found at serine 336. Repeat copies occupy residues glycine 339–glutamate 348, glycine 349–glutamate 358, and glycine 359–glutamate 368. A 3 X 10 AA tandem repeats of G-T-R-S-R-S-H-T-S-E region spans residues glycine 339–glutamate 368. At threonine 340 the chain carries Phosphothreonine. Serine 342 is modified (phosphoserine). Residues histidine 345–histidine 371 show a composition bias toward basic and acidic residues. Threonine 346 carries the phosphothreonine; by SGK1 modification. Position 352 is a phosphoserine (serine 352). At threonine 356 the chain carries Phosphothreonine; by SGK1. Serine 362 carries the post-translational modification Phosphoserine. At serine 364 the chain carries Phosphoserine; by SGK1. Residue threonine 366 is modified to Phosphothreonine; by SGK1. Threonine 375 carries the post-translational modification Phosphothreonine.

It belongs to the NDRG family. In terms of assembly, interacts with RAB4A (membrane-bound form); the interaction involves NDRG1 in vesicular recycling of CDH1. In terms of processing, under stress conditions, phosphorylated in the C-terminal on many serine and threonine residues. Phosphorylated in vitro by PKA. Phosphorylation enhanced by increased intracellular cAMP levels. Homocysteine induces dephosphorylation. Phosphorylation by SGK1 is cell cycle dependent. As to expression, ubiquitous; expressed most prominently in placental membranes and prostate, kidney, small intestine, and ovary tissues. Also expressed in heart, brain, skeletal muscle, lung, liver and pancreas. Low levels in peripheral blood leukocytes and in tissues of the immune system. Expressed mainly in epithelial cells. Also found in Schwann cells of peripheral neurons. Reduced expression in adenocarcinomas compared to normal tissues. In colon, prostate and placental membranes, the cells that border the lumen show the highest expression.

Its subcellular location is the cytoplasm. It localises to the cytosol. The protein resides in the cytoskeleton. It is found in the microtubule organizing center. The protein localises to the centrosome. Its subcellular location is the nucleus. It localises to the cell membrane. Functionally, stress-responsive protein involved in hormone responses, cell growth, and differentiation. Acts as a tumor suppressor in many cell types. Necessary but not sufficient for p53/TP53-mediated caspase activation and apoptosis. Has a role in cell trafficking, notably of the Schwann cell, and is necessary for the maintenance and development of the peripheral nerve myelin sheath. Required for vesicular recycling of CDH1 and TF. May also function in lipid trafficking. Protects cells from spindle disruption damage. Functions in p53/TP53-dependent mitotic spindle checkpoint. Regulates microtubule dynamics and maintains euploidy. This Homo sapiens (Human) protein is Protein NDRG1 (NDRG1).